The primary structure comprises 883 residues: Envelope glycoprotein B (883 aa).

The signal sequence occupies residues 1-31 (MQSYIAVNIDMASLKMLICVCVAILIPSTLS). Over 32–750 (QDSHGIAGII…SGIASFLSNP (719 aa)) the chain is Virion surface. Cystine bridges form between C77-C535, C94-C491, C167-C229, C321-C369, and C558-C608. N-linked (GlcNAc...) asparagine; by host glycans are attached at residues N102 and N121. An involved in fusion and/or binding to host membrane region spans residues 134–140 (TWALFSR). N-linked (GlcNAc...) asparagine; by host glycosylation is present at N211. Residues 216–223 (HQTLGYRT) form an involved in fusion and/or binding to host membrane region. Residues N262 and N360 are each glycosylated (N-linked (GlcNAc...) asparagine; by host). Positions 428–457 (QNHLPRGRERRQAAGRRTASLQSGPQGDRI) are disordered. N-linked (GlcNAc...) asparagine; by host glycans are attached at residues N579, N635, and N649. Hydrophobic membrane proximal region regions lie at residues 694-748 (IDTV…SFLS) and 724-744 (ALGTVVMTAAAAVISTVSGIA). The chain crosses the membrane as a helical span at residues 751–771 (FAALGIGIAVVVSIILGLLAF). Topologically, residues 772 to 883 (KYVMNLKSNP…PSWAEESEDE (112 aa)) are intravirion. The interval 791 to 817 (PPAGTPPRPSRRYYKDEEEVEEDSDED) is disordered. The span at 806–817 (DEEEVEEDSDED) shows a compositional bias: acidic residues. The Internalization motif signature appears at 868–871 (YPLL).

The protein belongs to the herpesviridae glycoprotein B family. In terms of assembly, homotrimer; disulfide-linked. Binds to heparan sulfate proteoglycans. Interacts with gH/gL heterodimer. A proteolytic cleavage by host furin generates two subunits that remain linked by disulfide bonds.

Its subcellular location is the virion membrane. The protein localises to the host cell membrane. It localises to the host endosome membrane. It is found in the host Golgi apparatus membrane. In terms of biological role, envelope glycoprotein that forms spikes at the surface of virion envelope. Essential for the initial attachment to heparan sulfate moieties of the host cell surface proteoglycans. Involved in fusion of viral and cellular membranes leading to virus entry into the host cell. Following initial binding to its host receptors, membrane fusion is mediated by the fusion machinery composed at least of gB and the heterodimer gH/gL. May be involved in the fusion between the virion envelope and the outer nuclear membrane during virion egress. This chain is Envelope glycoprotein B, found in Gallus gallus (Chicken).